Here is a 332-residue protein sequence, read N- to C-terminus: Putative peptide import ATP-binding protein BMEII0206 (332 aa).

The ABC transporter domain maps to 11 to 261; sequence LEVSNLSVDF…PLHPYTEGLL (251 aa). 47 to 54 is an ATP binding site; the sequence is GESGSGKS.

The protein belongs to the ABC transporter superfamily. As to quaternary structure, the complex is composed of two ATP-binding proteins (BMEII0205 and BMEII0206), two transmembrane proteins (BMEII0207/BMEII0208 and BMEII0209) and a solute-binding protein (BMEII0210).

The protein localises to the cell inner membrane. Probably part of an ABC transporter complex that could be involved in peptide import. Probably responsible for energy coupling to the transport system. This is Putative peptide import ATP-binding protein BMEII0206 from Brucella melitensis biotype 1 (strain ATCC 23456 / CCUG 17765 / NCTC 10094 / 16M).